A 511-amino-acid polypeptide reads, in one-letter code: Maturase K (511 aa).

It belongs to the intron maturase 2 family. MatK subfamily.

It is found in the plastid. The protein localises to the chloroplast. Its function is as follows. Usually encoded in the trnK tRNA gene intron. Probably assists in splicing its own and other chloroplast group II introns. In Poa pratensis (Kentucky bluegrass), this protein is Maturase K.